Reading from the N-terminus, the 104-residue chain is Turripeptide OL55-like (104 aa).

In terms of processing, contains 8 disulfide bonds. As to expression, expressed by the venom duct.

It localises to the secreted. In terms of biological role, acts as a neurotoxin by inhibiting an ion channel. This chain is Turripeptide OL55-like, found in Iotyrris cingulifera (Sea snail).